Reading from the N-terminus, the 301-residue chain is Probable alpha-L-glutamate ligase (301 aa).

The region spanning 104 to 287 is the ATP-grasp domain; it reads LQLLSRKGIG…VAGMIYEFIE (184 aa). Residues lysine 141, 178–179, aspartate 187, and 211–213 each bind ATP; these read EF and RSN. Positions 248, 260, and 262 each coordinate Mg(2+). The Mn(2+) site is built by aspartate 248, glutamate 260, and asparagine 262.

This sequence belongs to the RimK family. The cofactor is Mg(2+). Requires Mn(2+) as cofactor.

The polypeptide is Probable alpha-L-glutamate ligase (Vibrio vulnificus (strain CMCP6)).